The following is a 396-amino-acid chain: S-adenosylmethionine synthase (396 aa).

Position 16 (His16) interacts with ATP. Asp18 contributes to the Mg(2+) binding site. Glu44 serves as a coordination point for K(+). The L-methionine site is built by Glu57 and Gln100. The flexible loop stretch occupies residues 100–110; that stretch reads QSVDIAQGVDR. ATP-binding positions include 165 to 167, Asp240, 246 to 247, Ala263, and Lys267; these read DAK and RK. Asp240 is an L-methionine binding site. Position 271 (Lys271) interacts with L-methionine.

This sequence belongs to the AdoMet synthase family. In terms of assembly, homotetramer; dimer of dimers. Requires Mg(2+) as cofactor. K(+) serves as cofactor.

It is found in the cytoplasm. The catalysed reaction is L-methionine + ATP + H2O = S-adenosyl-L-methionine + phosphate + diphosphate. It participates in amino-acid biosynthesis; S-adenosyl-L-methionine biosynthesis; S-adenosyl-L-methionine from L-methionine: step 1/1. In terms of biological role, catalyzes the formation of S-adenosylmethionine (AdoMet) from methionine and ATP. The overall synthetic reaction is composed of two sequential steps, AdoMet formation and the subsequent tripolyphosphate hydrolysis which occurs prior to release of AdoMet from the enzyme. This Pseudomonas entomophila (strain L48) protein is S-adenosylmethionine synthase.